The primary structure comprises 500 residues: Glycerol kinase (500 aa).

ADP is bound at residue threonine 15. Positions 15, 16, and 17 each coordinate ATP. Threonine 15 provides a ligand contact to sn-glycerol 3-phosphate. Arginine 19 provides a ligand contact to ADP. Positions 85, 86, 137, and 245 each coordinate sn-glycerol 3-phosphate. Glycerol-binding residues include arginine 85, glutamate 86, tyrosine 137, aspartate 245, and glutamine 246. Threonine 267 and glycine 310 together coordinate ADP. Positions 267, 310, 314, and 411 each coordinate ATP. Residues glycine 411 and asparagine 415 each contribute to the ADP site.

It belongs to the FGGY kinase family.

The enzyme catalyses glycerol + ATP = sn-glycerol 3-phosphate + ADP + H(+). The protein operates within polyol metabolism; glycerol degradation via glycerol kinase pathway; sn-glycerol 3-phosphate from glycerol: step 1/1. With respect to regulation, inhibited by fructose 1,6-bisphosphate (FBP). In terms of biological role, key enzyme in the regulation of glycerol uptake and metabolism. Catalyzes the phosphorylation of glycerol to yield sn-glycerol 3-phosphate. In Aeromonas hydrophila subsp. hydrophila (strain ATCC 7966 / DSM 30187 / BCRC 13018 / CCUG 14551 / JCM 1027 / KCTC 2358 / NCIMB 9240 / NCTC 8049), this protein is Glycerol kinase.